A 468-amino-acid chain; its full sequence is Probable xyloglucan galactosyltransferase GT13 (468 aa).

At 1-18 (MDKFNPKKEKTVKKRALK) the chain is on the cytoplasmic side. A helical; Signal-anchor for type II membrane protein transmembrane segment spans residues 19–35 (VLTEISPTPLFSMLFLL). At 36 to 468 (HISQIATYLS…RVSLFKMTRI (433 aa)) the chain is on the lumenal side. Residues asparagine 53, asparagine 116, asparagine 153, asparagine 240, and asparagine 412 are each glycosylated (N-linked (GlcNAc...) asparagine).

The protein belongs to the glycosyltransferase 47 family. As to expression, expressed in roots, hypocotyls, cotyledons, leaves, stems, petals and carpels.

It localises to the golgi apparatus membrane. Functionally, functions in xyloglucan synthesis by adding side chains to the xylosylated glucan backbone. Involved in the galactosylation of hemicellulose xyloglucan. The sequence is that of Probable xyloglucan galactosyltransferase GT13 from Arabidopsis thaliana (Mouse-ear cress).